A 154-amino-acid polypeptide reads, in one-letter code: Ribosome maturation factor RimP (154 aa).

Belongs to the RimP family.

The protein resides in the cytoplasm. Its function is as follows. Required for maturation of 30S ribosomal subunits. The sequence is that of Ribosome maturation factor RimP from Desulforudis audaxviator (strain MP104C).